We begin with the raw amino-acid sequence, 385 residues long: Polyketide synthase 2 (385 aa).

Residue Cys-157 is part of the active site.

Belongs to the thiolase-like superfamily. Chalcone/stilbene synthases family. As to expression, expressed in leaves and glandular trichomes.

It localises to the cytoplasm. Its function is as follows. Polyketide synthase responsible for the biosynthesis of secondary metabolites. The sequence is that of Polyketide synthase 2 (PKSG2) from Cannabis sativa (Hemp).